Reading from the N-terminus, the 108-residue chain is UPF0145 protein Patl_2194 (108 aa).

It belongs to the UPF0145 family.

The protein is UPF0145 protein Patl_2194 of Pseudoalteromonas atlantica (strain T6c / ATCC BAA-1087).